Here is a 148-residue protein sequence, read N- to C-terminus: Large ribosomal subunit protein uL15 (148 aa).

Residues 1–51 (MNLSSLKPAEGAVKSRKRIGRGPGSGLGGTSTRGHKGAKSRSGYSKKIGFE) are disordered. Over residues 21–31 (RGPGSGLGGTS) the composition is skewed to gly residues.

The protein belongs to the universal ribosomal protein uL15 family. Part of the 50S ribosomal subunit.

In terms of biological role, binds to the 23S rRNA. In Porphyromonas gingivalis (strain ATCC BAA-308 / W83), this protein is Large ribosomal subunit protein uL15.